Reading from the N-terminus, the 366-residue chain is Alanine racemase (366 aa).

K40 (proton acceptor; specific for D-alanine) is an active-site residue. K40 carries the N6-(pyridoxal phosphate)lysine modification. A substrate-binding site is contributed by R136. Y263 serves as the catalytic Proton acceptor; specific for L-alanine. M310 is a binding site for substrate.

Belongs to the alanine racemase family. Pyridoxal 5'-phosphate serves as cofactor.

The catalysed reaction is L-alanine = D-alanine. Its pathway is amino-acid biosynthesis; D-alanine biosynthesis; D-alanine from L-alanine: step 1/1. Functionally, catalyzes the interconversion of L-alanine and D-alanine. May also act on other amino acids. This chain is Alanine racemase (alr), found in Streptococcus agalactiae serotype Ia (strain ATCC 27591 / A909 / CDC SS700).